The primary structure comprises 201 residues: Large ribosomal subunit protein uL4 (201 aa).

The disordered stretch occupies residues 39–70 (GRQGTKAQKTRSEVSGGGKKPWRQKGTGRARA).

It belongs to the universal ribosomal protein uL4 family. As to quaternary structure, part of the 50S ribosomal subunit.

One of the primary rRNA binding proteins, this protein initially binds near the 5'-end of the 23S rRNA. It is important during the early stages of 50S assembly. It makes multiple contacts with different domains of the 23S rRNA in the assembled 50S subunit and ribosome. In terms of biological role, forms part of the polypeptide exit tunnel. The protein is Large ribosomal subunit protein uL4 of Marinobacter nauticus (strain ATCC 700491 / DSM 11845 / VT8) (Marinobacter aquaeolei).